We begin with the raw amino-acid sequence, 410 residues long: Acetate kinase (410 aa).

N7 is a binding site for Mg(2+). K14 contacts ATP. Position 88 (R88) interacts with substrate. Residue D145 is the Proton donor/acceptor of the active site. Residues 203-207, 278-280, and 326-330 each bind ATP; these read HAGNG, DTR, and GIGEN. Position 379 (E379) interacts with Mg(2+).

The protein belongs to the acetokinase family. As to quaternary structure, homodimer. Mg(2+) is required as a cofactor. Mn(2+) serves as cofactor.

The protein localises to the cytoplasm. It carries out the reaction acetate + ATP = acetyl phosphate + ADP. The protein operates within metabolic intermediate biosynthesis; acetyl-CoA biosynthesis; acetyl-CoA from acetate: step 1/2. In terms of biological role, catalyzes the formation of acetyl phosphate from acetate and ATP. Can also catalyze the reverse reaction. The sequence is that of Acetate kinase from Aster yellows witches'-broom phytoplasma (strain AYWB).